The chain runs to 352 residues: Cobalt transport protein NhlF (352 aa).

The next 8 membrane-spanning stretches (helical) occupy residues Leu-23 to Gly-43, Gly-46 to Val-66, Val-95 to Ala-115, Glu-131 to Leu-151, Pro-206 to Leu-226, Ala-230 to Ala-250, Val-290 to Phe-310, and Phe-323 to Leu-343.

This sequence belongs to the NiCoT transporter (TC 2.A.52) family.

It is found in the cell membrane. Its activity is regulated as follows. Cobalt uptake is inhibited by uncouplers (CCCP and 3,5-di-tert-butyl-4-hydroxybenzylidenemalononitrile) and by the addition of excess nickel. In terms of biological role, mediates energy-dependent uptake of cobalt ions into the cell. Can also transport nickel ions, but cobalt is the preferred substrate. This Rhodococcus rhodochrous protein is Cobalt transport protein NhlF (nhlF).